The primary structure comprises 341 residues: NADH-quinone oxidoreductase subunit H 1 (341 aa).

9 consecutive transmembrane segments (helical) span residues 7–27 (IILT…ISLL), 46–66 (PNVV…KYIF), 80–100 (FFLA…VIPF), 111–131 (VAIL…IMGG), 157–177 (LGLI…SHIV), 183–203 (AFGL…LFFI), 244–264 (YIAI…GWLS), 273–293 (VFWM…VKAI), and 305–325 (IGWK…AFLA).

The protein belongs to the complex I subunit 1 family. NDH-1 is composed of 14 different subunits. Subunits NuoA, H, J, K, L, M, N constitute the membrane sector of the complex.

The protein localises to the cell inner membrane. The enzyme catalyses a quinone + NADH + 5 H(+)(in) = a quinol + NAD(+) + 4 H(+)(out). NDH-1 shuttles electrons from NADH, via FMN and iron-sulfur (Fe-S) centers, to quinones in the respiratory chain. The immediate electron acceptor for the enzyme in this species is believed to be ubiquinone. Couples the redox reaction to proton translocation (for every two electrons transferred, four hydrogen ions are translocated across the cytoplasmic membrane), and thus conserves the redox energy in a proton gradient. This subunit may bind ubiquinone. In Cereibacter sphaeroides (strain ATCC 17029 / ATH 2.4.9) (Rhodobacter sphaeroides), this protein is NADH-quinone oxidoreductase subunit H 1.